Consider the following 478-residue polypeptide: Cysteine--tRNA ligase (478 aa).

Cys-29 contributes to the Zn(2+) binding site. A 'HIGH' region motif is present at residues 31–41 (PTVYDIPHIGN). Residues Cys-216, His-241, and Glu-245 each contribute to the Zn(2+) site. Positions 274–278 (KMSKS) match the 'KMSKS' region motif. Position 277 (Lys-277) interacts with ATP.

It belongs to the class-I aminoacyl-tRNA synthetase family. In terms of assembly, monomer. The cofactor is Zn(2+).

It localises to the cytoplasm. The catalysed reaction is tRNA(Cys) + L-cysteine + ATP = L-cysteinyl-tRNA(Cys) + AMP + diphosphate. This chain is Cysteine--tRNA ligase, found in Orientia tsutsugamushi (strain Ikeda) (Rickettsia tsutsugamushi).